We begin with the raw amino-acid sequence, 465 residues long: MDNTSSVPWASAASVTCLSLDAKCHSSSAKSTASSISATPESQTMRHIAHTQRCLSRLTSLVALLLIVLPMNFSPAHSCGPGRGLGRHRARNLYPLVLKQTIPNLSEYTNSASGPLEGVIRRDSPKFKDLVPNYNRDILFRDEEGTGADRLMSKRCREKLNLLAYSVMNEWPGIRLLVTESWDEDYHHGQESLHYEGRAVTIATSDRDQSKYGMLARLAVEAGFDWVSYVSRRHIYCSVKSDSSISSHVHGCFTPESTALLESGVRKPLGELSIGDRVLSMTANGQAVYSEVILFMDRNLEQMQNFVQLHTDGGAVLTVTPAHLISVWQPESQKLTFVFADRIEEKNQVLVRDSETGELRPQRVIKVGSVRSKGVVAPLTREGTIVVNSVAASCYAVINSQSLAHWGLAPMRLLSTLEAWLPAKEQLHSSPKVVSSAEQQNGIHWYANALYKVKDYVLPQSWRHD.

Cysteine 79 carries N-palmitoyl cysteine lipidation. Positions 143, 144, 149, 179, 180, 183, and 185 each coordinate Ca(2+). Glycine 251 is lipidated: Cholesterol glycine ester.

It belongs to the hedgehog family. As to quaternary structure, interacts with shf. Post-translationally, the C-terminal part of the hedgehog protein precursor displays an autoproteolysis activity that results in the cleavage of the full-length protein into two parts (N-product and C-product). In addition, the C-terminal part displays a cholesterol transferase activity that results by the covalent attachment of a cholesterol moiety to the C-terminal of the newly generated N-product. The N-product is the active species in both local and long-range signaling, whereas the C-product has no signaling activity. In terms of processing, cholesterylation is required for N-product targeting to lipid rafts and multimerization. N-palmitoylation by Rasp of the hedgehog N-product, within the secretory pathway, is required for the embryonic and larval patterning activities of the hedgehog signal.

It localises to the nucleus. Its subcellular location is the cytoplasm. It is found in the cell membrane. It carries out the reaction glycyl-L-cysteinyl-[protein] + cholesterol + H(+) = [protein]-C-terminal glycyl cholesterol ester + N-terminal L-cysteinyl-[protein]. Its function is as follows. The C-terminal part of the hedgehog protein precursor displays an autoproteolysis activity that results in the cleavage of the full-length protein into two parts (N-product and C-product). In addition, the C-terminal part displays a cholesterol transferase activity that results by the covalent attachment of a cholesterol moiety to the C-terminal of the newly generated N-product. Once cleaved, the C-product has no signaling activity and diffuses from the cell. In terms of biological role, the dually lipidated hedgehog protein N-product is a morphogen which is essential for a variety of patterning events during development. Establishes the anterior-posterior axis of the embryonic segments and patterns the larval imaginal disks. Binds to the patched (ptc) receptor, which functions in association with smoothened (smo), to activate the transcription of target genes wingless (wg), decapentaplegic (dpp) and ptc. In the absence of hh, ptc represses the constitutive signaling activity of smo through fused (fu). Essential component of a signaling pathway which regulates the Duox-dependent gut immune response to bacterial uracil; required to activate Cad99C-dependent endosome formation, norpA-dependent Ca2+ mobilization and p38 MAPK, which are essential steps in the Duox-dependent production of reactive oxygen species (ROS) in response to intestinal bacterial infection. During photoreceptor differentiation, it up-regulates transcription of Ubr3, which in turn promotes the hh-signaling pathway by mediating the ubiquitination and degradation of cos. The sequence is that of Protein hedgehog from Drosophila yakuba (Fruit fly).